Reading from the N-terminus, the 248-residue chain is Histidine utilization repressor (248 aa).

An HTH gntR-type domain is found at 18–86 (APLYARVKQM…QGVGTFVAEP (69 aa)). The H-T-H motif DNA-binding region spans 46–65 (ESELVNELGFSRMTINRALR).

The protein operates within amino-acid degradation; L-histidine degradation into L-glutamate [regulation]. Repressor which binds to the hutP region in the histidine utilization (hut) operon. It blocks the expression of all the hut genes in the absence of inducer. The sequence is that of Histidine utilization repressor (hutC) from Pseudomonas putida (Arthrobacter siderocapsulatus).